The primary structure comprises 269 residues: Putative pyruvate, phosphate dikinase regulatory protein (269 aa).

147–154 is an ADP binding site; that stretch reads GLSRTSKT.

The protein belongs to the pyruvate, phosphate/water dikinase regulatory protein family. PDRP subfamily.

It carries out the reaction N(tele)-phospho-L-histidyl/L-threonyl-[pyruvate, phosphate dikinase] + ADP = N(tele)-phospho-L-histidyl/O-phospho-L-threonyl-[pyruvate, phosphate dikinase] + AMP + H(+). It catalyses the reaction N(tele)-phospho-L-histidyl/O-phospho-L-threonyl-[pyruvate, phosphate dikinase] + phosphate + H(+) = N(tele)-phospho-L-histidyl/L-threonyl-[pyruvate, phosphate dikinase] + diphosphate. Its function is as follows. Bifunctional serine/threonine kinase and phosphorylase involved in the regulation of the pyruvate, phosphate dikinase (PPDK) by catalyzing its phosphorylation/dephosphorylation. In Clostridium botulinum (strain 657 / Type Ba4), this protein is Putative pyruvate, phosphate dikinase regulatory protein.